Here is a 310-residue protein sequence, read N- to C-terminus: Aspartate carbamoyltransferase catalytic subunit (310 aa).

Residues R59 and T60 each coordinate carbamoyl phosphate. K87 is an L-aspartate binding site. Residues R109, H137, and Q140 each contribute to the carbamoyl phosphate site. L-aspartate is bound by residues R170 and R225. The carbamoyl phosphate site is built by G266 and P267.

Belongs to the aspartate/ornithine carbamoyltransferase superfamily. ATCase family. In terms of assembly, heterododecamer (2C3:3R2) of six catalytic PyrB chains organized as two trimers (C3), and six regulatory PyrI chains organized as three dimers (R2).

The catalysed reaction is carbamoyl phosphate + L-aspartate = N-carbamoyl-L-aspartate + phosphate + H(+). It functions in the pathway pyrimidine metabolism; UMP biosynthesis via de novo pathway; (S)-dihydroorotate from bicarbonate: step 2/3. Functionally, catalyzes the condensation of carbamoyl phosphate and aspartate to form carbamoyl aspartate and inorganic phosphate, the committed step in the de novo pyrimidine nucleotide biosynthesis pathway. The sequence is that of Aspartate carbamoyltransferase catalytic subunit from Pelobacter propionicus (strain DSM 2379 / NBRC 103807 / OttBd1).